Consider the following 496-residue polypeptide: Stomatal closure-related actin-binding protein 1 (496 aa).

Positions Arg-126–Met-269 form a coiled coil.

This sequence belongs to the SCAB family. In terms of assembly, dimer. Dimerization is required for actin-binding activity. As to expression, expressed in roots, stems, leaves, flowers, siliques and guard cells.

Its subcellular location is the cytoplasm. It is found in the cytoskeleton. Its function is as follows. Plant-specific actin binding protein that bundles and stabilizes microfilaments (MFs). Has no nucleation or capping activity. Regulates MF reorganization during stomatal closure. The binding to F-actin is insensitive to Ca(2+) and pH. Binds weakly to inositol phosphates. The protein is Stomatal closure-related actin-binding protein 1 of Arabidopsis thaliana (Mouse-ear cress).